A 240-amino-acid chain; its full sequence is UDP-2,3-diacylglucosamine hydrolase (240 aa).

Positions 8, 10, 41, 79, and 114 each coordinate Mn(2+). Residue 79–80 coordinates substrate; sequence NR. Substrate-binding residues include Asp-122, Ser-160, Asn-164, Lys-167, and His-195. 2 residues coordinate Mn(2+): His-195 and His-197.

Belongs to the LpxH family. Mn(2+) serves as cofactor.

It is found in the cell inner membrane. It carries out the reaction UDP-2-N,3-O-bis[(3R)-3-hydroxytetradecanoyl]-alpha-D-glucosamine + H2O = 2-N,3-O-bis[(3R)-3-hydroxytetradecanoyl]-alpha-D-glucosaminyl 1-phosphate + UMP + 2 H(+). Its pathway is glycolipid biosynthesis; lipid IV(A) biosynthesis; lipid IV(A) from (3R)-3-hydroxytetradecanoyl-[acyl-carrier-protein] and UDP-N-acetyl-alpha-D-glucosamine: step 4/6. Functionally, hydrolyzes the pyrophosphate bond of UDP-2,3-diacylglucosamine to yield 2,3-diacylglucosamine 1-phosphate (lipid X) and UMP by catalyzing the attack of water at the alpha-P atom. Involved in the biosynthesis of lipid A, a phosphorylated glycolipid that anchors the lipopolysaccharide to the outer membrane of the cell. This chain is UDP-2,3-diacylglucosamine hydrolase, found in Photorhabdus laumondii subsp. laumondii (strain DSM 15139 / CIP 105565 / TT01) (Photorhabdus luminescens subsp. laumondii).